Consider the following 418-residue polypeptide: tRNA-2-methylthio-N(6)-dimethylallyladenosine synthase (418 aa).

The region spanning 2–118 is the MTTase N-terminal domain; that stretch reads PGYYLWTIGC…WREIPEGFIL (117 aa). C11, C47, C81, C134, C138, and C141 together coordinate [4Fe-4S] cluster. The 232-residue stretch at 120 to 351 folds into the Radical SAM core domain; it reads LRPPVSANVT…EDLQKETVGK (232 aa). In terms of domain architecture, TRAM spans 346 to 414; the sequence is KETVGKANAA…PWSLQAKLVN (69 aa).

Belongs to the methylthiotransferase family. MiaB subfamily. As to quaternary structure, monomer. The cofactor is [4Fe-4S] cluster.

Its subcellular location is the cytoplasm. It catalyses the reaction N(6)-dimethylallyladenosine(37) in tRNA + (sulfur carrier)-SH + AH2 + 2 S-adenosyl-L-methionine = 2-methylsulfanyl-N(6)-dimethylallyladenosine(37) in tRNA + (sulfur carrier)-H + 5'-deoxyadenosine + L-methionine + A + S-adenosyl-L-homocysteine + 2 H(+). In terms of biological role, catalyzes the methylthiolation of N6-(dimethylallyl)adenosine (i(6)A), leading to the formation of 2-methylthio-N6-(dimethylallyl)adenosine (ms(2)i(6)A) at position 37 in tRNAs that read codons beginning with uridine. This Dehalococcoides mccartyi (strain CBDB1) protein is tRNA-2-methylthio-N(6)-dimethylallyladenosine synthase.